The primary structure comprises 192 residues: Transcription termination/antitermination protein NusG (192 aa).

Positions 140 to 168 (VGEVVTVTDGPFETFMGTVEEIDKERNRL) constitute a KOW domain.

Belongs to the NusG family.

Its function is as follows. Participates in transcription elongation, termination and antitermination. The protein is Transcription termination/antitermination protein NusG of Rickettsia typhi (strain ATCC VR-144 / Wilmington).